Consider the following 399-residue polypeptide: Tryptophan synthase beta chain (399 aa).

At lysine 92 the chain carries N6-(pyridoxal phosphate)lysine.

It belongs to the TrpB family. As to quaternary structure, tetramer of two alpha and two beta chains. Pyridoxal 5'-phosphate is required as a cofactor.

It catalyses the reaction (1S,2R)-1-C-(indol-3-yl)glycerol 3-phosphate + L-serine = D-glyceraldehyde 3-phosphate + L-tryptophan + H2O. It functions in the pathway amino-acid biosynthesis; L-tryptophan biosynthesis; L-tryptophan from chorismate: step 5/5. Its function is as follows. The beta subunit is responsible for the synthesis of L-tryptophan from indole and L-serine. In Nitrosomonas eutropha (strain DSM 101675 / C91 / Nm57), this protein is Tryptophan synthase beta chain.